We begin with the raw amino-acid sequence, 493 residues long: Guanosine-5'-triphosphate,3'-diphosphate pyrophosphatase (493 aa).

It belongs to the GppA/Ppx family. GppA subfamily.

The enzyme catalyses guanosine 3'-diphosphate 5'-triphosphate + H2O = guanosine 3',5'-bis(diphosphate) + phosphate + H(+). The protein operates within purine metabolism; ppGpp biosynthesis; ppGpp from GTP: step 2/2. Functionally, catalyzes the conversion of pppGpp to ppGpp. Guanosine pentaphosphate (pppGpp) is a cytoplasmic signaling molecule which together with ppGpp controls the 'stringent response', an adaptive process that allows bacteria to respond to amino acid starvation, resulting in the coordinated regulation of numerous cellular activities. This Salmonella choleraesuis (strain SC-B67) protein is Guanosine-5'-triphosphate,3'-diphosphate pyrophosphatase.